The chain runs to 230 residues: Octanoyltransferase (230 aa).

Residues 38-215 form the BPL/LPL catalytic domain; sequence AGGADTLLLL…AVCAALDGVL (178 aa). Substrate is bound by residues 76–83, 145–147, and 158–160; these read RGGKITWH, AIG, and GFA. Cys-176 functions as the Acyl-thioester intermediate in the catalytic mechanism.

Belongs to the LipB family.

Its subcellular location is the cytoplasm. The enzyme catalyses octanoyl-[ACP] + L-lysyl-[protein] = N(6)-octanoyl-L-lysyl-[protein] + holo-[ACP] + H(+). It functions in the pathway protein modification; protein lipoylation via endogenous pathway; protein N(6)-(lipoyl)lysine from octanoyl-[acyl-carrier-protein]: step 1/2. In terms of biological role, catalyzes the transfer of endogenously produced octanoic acid from octanoyl-acyl-carrier-protein onto the lipoyl domains of lipoate-dependent enzymes. Lipoyl-ACP can also act as a substrate although octanoyl-ACP is likely to be the physiological substrate. The polypeptide is Octanoyltransferase (Mycobacterium bovis (strain BCG / Tokyo 172 / ATCC 35737 / TMC 1019)).